Here is a 23-residue protein sequence, read N- to C-terminus: Caerin-4.3 (23 aa).

Expressed by the skin parotoid and/or rostral glands.

It localises to the secreted. Functionally, antibacterial peptide, that adopts an alpha helical conformation which can disrupt bacterial membranes. Each caerin displays a different antimicrobial specificity. This Ranoidea caerulea (Green tree frog) protein is Caerin-4.3.